Reading from the N-terminus, the 109-residue chain is Spermidine export protein MdtI (109 aa).

The next 4 helical transmembrane spans lie at W6–L26, I36–V56, A64–F84, and L88–L108.

This sequence belongs to the drug/metabolite transporter (DMT) superfamily. Small multidrug resistance (SMR) (TC 2.A.7.1) family. MdtI subfamily. Forms a complex with MdtJ.

The protein resides in the cell inner membrane. Functionally, catalyzes the excretion of spermidine. This is Spermidine export protein MdtI from Escherichia coli O81 (strain ED1a).